Consider the following 291-residue polypeptide: N-acetylmannosamine kinase (291 aa).

ATP-binding positions include 5–12 (AIDIGGTK) and 132–139 (GVGGGVVS). His-156, Cys-166, Cys-168, and Cys-173 together coordinate Zn(2+).

It belongs to the ROK (NagC/XylR) family. NanK subfamily. As to quaternary structure, homodimer.

It catalyses the reaction an N-acyl-D-mannosamine + ATP = an N-acyl-D-mannosamine 6-phosphate + ADP + H(+). The protein operates within amino-sugar metabolism; N-acetylneuraminate degradation; D-fructose 6-phosphate from N-acetylneuraminate: step 2/5. Its function is as follows. Catalyzes the phosphorylation of N-acetylmannosamine (ManNAc) to ManNAc-6-P. In Shigella flexneri serotype 5b (strain 8401), this protein is N-acetylmannosamine kinase.